The sequence spans 207 residues: Guanylate kinase (207 aa).

The region spanning 5–184 (GNLFIVSAPS…ALADLRAIIR (180 aa)) is the Guanylate kinase-like domain. Residue 12–19 (APSGAGKS) participates in ATP binding.

This sequence belongs to the guanylate kinase family.

It is found in the cytoplasm. The catalysed reaction is GMP + ATP = GDP + ADP. Essential for recycling GMP and indirectly, cGMP. This chain is Guanylate kinase, found in Shewanella sp. (strain MR-7).